Reading from the N-terminus, the 379-residue chain is Cytochrome b (379 aa).

Transmembrane regions (helical) follow at residues 33–53 (FGSLLGLCLIVQTLTGLFLAM), 77–98 (WLIRNLHANGASMFFICLYLHI), 113–133 (WNIGVVLLLLVMAAAFVGYVL), and 178–198 (FFTFHFLLPFTIIALTMLHLL). Heme b contacts are provided by His83 and His97. 2 residues coordinate heme b: His182 and His196. His201 provides a ligand contact to a ubiquinone. 4 consecutive transmembrane segments (helical) span residues 226–246 (YKDLLGATLMITTLLTLVLFS), 288–308 (LGGVLALLFSILILMIVPLLH), 320–340 (FSQTLFWLLISNVLILTWIGG), and 347–367 (FIIIGQLASVTYFTLFLVVMP).

It belongs to the cytochrome b family. The cytochrome bc1 complex contains 3 respiratory subunits (MT-CYB, CYC1 and UQCRFS1), 2 core proteins (UQCRC1 and UQCRC2) and probably 6 low-molecular weight proteins. Heme b is required as a cofactor.

It localises to the mitochondrion inner membrane. Its function is as follows. Component of the ubiquinol-cytochrome c reductase complex (complex III or cytochrome b-c1 complex) that is part of the mitochondrial respiratory chain. The b-c1 complex mediates electron transfer from ubiquinol to cytochrome c. Contributes to the generation of a proton gradient across the mitochondrial membrane that is then used for ATP synthesis. The protein is Cytochrome b (MT-CYB) of Iguana iguana (Common iguana).